We begin with the raw amino-acid sequence, 92 residues long: DNA-binding protein HU 1 (92 aa).

Position 4 is a phosphothreonine (Thr4).

The protein belongs to the bacterial histone-like protein family. In terms of assembly, homodimer. (Microbial infection) Interacts with Bacillus phage SP01 Gp46; the interaction replaces dsDNA from the hbs-DNA complex.

The protein resides in the cytoplasm. Its subcellular location is the nucleoid. In terms of biological role, histone-like DNA-binding protein which introduces negative supercoils in relaxed plasmid DNA in the presence of topoisomerase I. There are at least 20,000 monomers/cell. Capable of wrapping DNA to stabilize it, and thus to prevent its denaturation under extreme environmental conditions. Binds evenly across chromosome, does not display a preference for AT content. Binds ss- and dsDNA in a sequence non-specific manner; 8 nucleotides are sufficient to bind protein. This Bacillus subtilis (strain 168) protein is DNA-binding protein HU 1.